Here is a 203-residue protein sequence, read N- to C-terminus: ATP-dependent Clp protease proteolytic subunit (203 aa).

Ser-107 functions as the Nucleophile in the catalytic mechanism. Residue His-132 is part of the active site.

It belongs to the peptidase S14 family. As to quaternary structure, fourteen ClpP subunits assemble into 2 heptameric rings which stack back to back to give a disk-like structure with a central cavity, resembling the structure of eukaryotic proteasomes.

Its subcellular location is the cytoplasm. It catalyses the reaction Hydrolysis of proteins to small peptides in the presence of ATP and magnesium. alpha-casein is the usual test substrate. In the absence of ATP, only oligopeptides shorter than five residues are hydrolyzed (such as succinyl-Leu-Tyr-|-NHMec, and Leu-Tyr-Leu-|-Tyr-Trp, in which cleavage of the -Tyr-|-Leu- and -Tyr-|-Trp bonds also occurs).. Cleaves peptides in various proteins in a process that requires ATP hydrolysis. Has a chymotrypsin-like activity. Plays a major role in the degradation of misfolded proteins. This Shewanella loihica (strain ATCC BAA-1088 / PV-4) protein is ATP-dependent Clp protease proteolytic subunit.